The chain runs to 504 residues: MEEFQRYLELDRFRQHDFLYPLLFREYIYALAHDHGFNSYMLLENIGYDNKSSLLIVKRLITRMYQHNYLMISANDSNQNQFFGYNKNLHSQIISEGFAVIVEIPFSLRLISSFEGAEIVISYKLRSIHSIFPFLEDKLPHLNYTTDVRIPYPIHLEILIQTLRSRVKDASYLHLLRFFLHQYSNWNILIITTKSISIFSKSNPRFFLFLYNSHICQYESIFLFLGNQSSHLRLISSGVLFERLYLHKKIEHFAEVFANDFPVIPCFLKDPFMHYVRYQGKSILASKDTPLLMNKWKYYLVNLWQCHFYVWSHPGRIHINQLSKHSLDFWGYFSSVRLNPSVVRSQMLENSFLINNAPKKLDIIVPIIPLIGSLAKARFCNALGHPISKLTRADLSDFEILNRFLRICRNLSHYYSGSSKKKSMYRIKYILRLSCVKTLARKHKSTARAFLKKVGSEFVQEFFTEEEEFLSLIFPRTSFTLRRLYRGRVWYLDIIFINGLANHE.

Belongs to the intron maturase 2 family. MatK subfamily.

The protein localises to the plastid. Its subcellular location is the chloroplast. Its function is as follows. Usually encoded in the trnK tRNA gene intron. Probably assists in splicing its own and other chloroplast group II introns. The protein is Maturase K of Fagus crenata (Japanese beech).